The primary structure comprises 2273 residues: Acetyl-CoA carboxylase, mitochondrial (2273 aa).

The N-terminal 104 residues, 1-104 (KGKTITHGQS…RGNIHKHTRL (104 aa)), are a transit peptide targeting the mitochondrion. The Biotin carboxylation domain occupies 134–635 (VISKILIANN…STGWLDDLIL (502 aa)). In terms of domain architecture, ATP-grasp spans 292–484 (KTNFVSVPDD…LPATQLQIAM (193 aa)). 332–337 (GGGGKG) serves as a coordination point for ATP. Residue R459 is part of the active site. In terms of domain architecture, Biotinyl-binding spans 763-837 (LEAELNPTQV…EAGDVIAKLT (75 aa)). Position 804 is an N6-biotinyllysine (K804). The CoA carboxyltransferase N-terminal domain maps to 1532–1867 (PYSVKDWLQP…KRDMSPPLLE (336 aa)). Residues 1532-2187 (PYSVKDWLQP…EGQVIKRLQK (656 aa)) form a carboxyltransferase region. The CoA site is built by R1776, K2080, and R2082. A CoA carboxyltransferase C-terminal domain is found at 1871–2187 (RWDRDVDFKP…EGQVIKRLQK (317 aa)).

Requires biotin as cofactor.

It localises to the mitochondrion. It carries out the reaction hydrogencarbonate + acetyl-CoA + ATP = malonyl-CoA + ADP + phosphate + H(+). The enzyme catalyses N(6)-biotinyl-L-lysyl-[protein] + hydrogencarbonate + ATP = N(6)-carboxybiotinyl-L-lysyl-[protein] + ADP + phosphate + H(+). Its pathway is lipid metabolism; malonyl-CoA biosynthesis; malonyl-CoA from acetyl-CoA: step 1/1. Catalyzes the rate-limiting reaction in the mitochondrial fatty acid synthesis (FAS) type II pathway. Responsible for the production of the mitochondrial malonyl-CoA, used for the biosynthesis of the cofactor lipoic acid. This protein carries three functions: biotin carboxyl carrier protein, biotin carboxylase, and carboxyltransferase. The polypeptide is Acetyl-CoA carboxylase, mitochondrial (HFA1) (Saccharomyces cerevisiae (strain ATCC 204508 / S288c) (Baker's yeast)).